The primary structure comprises 91 residues: Small ribosomal subunit protein bS20 (91 aa).

Disordered regions lie at residues 1–26 (MALRHKSAQKRHRQSLKRRMLNRSRK) and 67–91 (HKNAAARKKSRLAKAINRVKAAQQS).

Belongs to the bacterial ribosomal protein bS20 family.

Its function is as follows. Binds directly to 16S ribosomal RNA. This Deinococcus deserti (strain DSM 17065 / CIP 109153 / LMG 22923 / VCD115) protein is Small ribosomal subunit protein bS20.